The primary structure comprises 219 residues: Octanoyltransferase (219 aa).

One can recognise a BPL/LPL catalytic domain in the interval 24 to 212 (KFRRECILFL…NLNSFLGPIS (189 aa)). Residues 69-76 (RGGDFTAH), 140-142 (SIG), and 153-155 (GVA) each bind substrate. Cys-171 serves as the catalytic Acyl-thioester intermediate.

The protein belongs to the LipB family.

Its subcellular location is the cytoplasm. The catalysed reaction is octanoyl-[ACP] + L-lysyl-[protein] = N(6)-octanoyl-L-lysyl-[protein] + holo-[ACP] + H(+). It functions in the pathway protein modification; protein lipoylation via endogenous pathway; protein N(6)-(lipoyl)lysine from octanoyl-[acyl-carrier-protein]: step 1/2. Functionally, catalyzes the transfer of endogenously produced octanoic acid from octanoyl-acyl-carrier-protein onto the lipoyl domains of lipoate-dependent enzymes. Lipoyl-ACP can also act as a substrate although octanoyl-ACP is likely to be the physiological substrate. This Leptospira borgpetersenii serovar Hardjo-bovis (strain JB197) protein is Octanoyltransferase.